A 200-amino-acid polypeptide reads, in one-letter code: Ras-related protein RABF2b (200 aa).

17–25 is a GTP binding site; sequence GDVGAGKSS. An Effector region motif is present at residues 39-47; that stretch reads QESTIGAAF. GTP-binding positions include 65–69, 123–126, and 153–154; these read DTAGQ, NKSD, and SA. Residues Cys198 and Cys199 are each lipidated (S-geranylgeranyl cysteine).

This sequence belongs to the small GTPase superfamily. Rab family. In terms of assembly, interacts with VPS9A homodimer. Interacts with TCTP1. Interacts with MON1. Interacts with EREX (via PX domain). Binds to VPS3. In terms of tissue distribution, expressed in roots and actively dividing cells.

It is found in the early endosome membrane. It localises to the endosome membrane. The protein localises to the prevacuolar compartment membrane. The protein resides in the endosome. Its subcellular location is the multivesicular body membrane. It is found in the cell membrane. It localises to the cytoplasm. With respect to regulation, regulated by guanine nucleotide exchange factors (GEFs) which promote the exchange of bound GDP for free GTP. Endosomal protein that may be involved in endocytosis. Involved in the trafficking of proteins from prevacuolar compartments (PVCs) to vacuoles. May activate the MON1-CCZ1 complex which acts as guanine nucleotide exchange factors (GEF) for Rab7 protein family, and serves as a link between Rab5 and Rab7 families in PVCs, and mediates PVC maturation. Involved in vacuolar transport of storage proteins with EREX as effector. Regulates membrane trafficking to protein storage vacuoles (PSVs). This is Ras-related protein RABF2b from Arabidopsis thaliana (Mouse-ear cress).